The following is a 147-amino-acid chain: Hemoglobin subunit beta (147 aa).

In terms of domain architecture, Globin spans 3–147; sequence HWTAEEKQLI…VAHALARKYH (145 aa). Heme b contacts are provided by His64 and His93.

The protein belongs to the globin family. As to quaternary structure, heterotetramer of two alpha chains and two beta chains. Red blood cells.

In terms of biological role, involved in oxygen transport from the lung to the various peripheral tissues. This chain is Hemoglobin subunit beta (HBB), found in Cairina moschata (Muscovy duck).